The primary structure comprises 156 residues: Dihydrofolate reductase (156 aa).

Positions 1 to 156 (MLKLIWCQTL…VNYYSNKKEK (156 aa)) constitute a DHFR domain.

Belongs to the dihydrofolate reductase family.

The enzyme catalyses (6S)-5,6,7,8-tetrahydrofolate + NADP(+) = 7,8-dihydrofolate + NADPH + H(+). Its pathway is cofactor biosynthesis; tetrahydrofolate biosynthesis; 5,6,7,8-tetrahydrofolate from 7,8-dihydrofolate: step 1/1. In terms of biological role, key enzyme in folate metabolism. Catalyzes an essential reaction for de novo glycine and purine synthesis, and for DNA precursor synthesis. The sequence is that of Dihydrofolate reductase (folA) from Ureaplasma parvum serovar 3 (strain ATCC 700970).